The primary structure comprises 135 residues: Galectin-1 (135 aa).

Alanine 2 is subject to N-acetylalanine. In terms of domain architecture, Galectin spans 4 to 135 (GLVASNLNLK…DFKIKCVAFE (132 aa)). Residues lysine 13 and lysine 29 each carry the N6-acetyllysine modification. The residue at position 30 (serine 30) is a Phosphoserine. Residues 45 to 49 (HFNPR), histidine 53, asparagine 62, and 69 to 72 (WGAE) each bind a beta-D-galactoside. Lysine 108 is subject to N6-acetyllysine; alternate. Lysine 108 is subject to N6-succinyllysine; alternate. The residue at position 128 (lysine 128) is an N6-acetyllysine.

In terms of assembly, homodimer. Binds LGALS3BP. Interacts with CD2, CD3, CD4, CD6, CD7, CD43, ALCAM and CD45. Interacts with laminin (via poly-N-acetyllactosamine). Interacts with SUSD2. Interacts with cargo receptor TMED10; the interaction mediates the translocation from the cytoplasm into the ERGIC (endoplasmic reticulum-Golgi intermediate compartment) and thereby secretion.

The protein localises to the secreted. It is found in the extracellular space. Its subcellular location is the extracellular matrix. It localises to the cytoplasm. In terms of biological role, lectin that binds beta-galactoside and a wide array of complex carbohydrates. Plays a role in regulating apoptosis, cell proliferation and cell differentiation. Inhibits CD45 protein phosphatase activity and therefore the dephosphorylation of Lyn kinase. Strong inducer of T-cell apoptosis. Has hemagglutinating activity towards human erythrocytes. The sequence is that of Galectin-1 from Capra hircus (Goat).